The following is a 452-amino-acid chain: MNSGILQVFQRELICPICMNYFIDPVTIDCGHSFCRPCFYLNWKDSPFLVQCSECTKSTGQINLKTNIHFKKMASLARKVSLWLFLSSEEQMCGTHRETKKMFCEVDRSLLCLLCSSSQEHRDHRHCPIESAAEEHQEKLLQKMQSLWEKACENHRNLNVETTRTRCWKDYVNLRLEAIRAEYQKMPAFHHEEEKHNLEMLKKKGKDIFHRLHLSKAKMAHRREILRGMYEELNEMCHKPDVELLQAFGDILHRSESVLLHMPQPLNPELSAGPITGLRDRLNQFRVHITLHHEEANSDIFLCEILRSMCIGCDHQDVPYFTATPRSFLAWGAQTFTSGKYYWEVHVGDSWNWAFGVCNMYWKEKNQNEKIDGEDGLFLLGCVKNDIQRSLFTTSPLLLQYIPRPTSRVGLFLDCEAKTVSFVDVNQSSLIYTIPNCSFSPPLRPIFCCIHF.

An RING-type zinc finger spans residues 15–56 (CPICMNYFIDPVTIDCGHSFCRPCFYLNWKDSPFLVQCSECT). A B box-type zinc finger spans residues 88-129 (SEEQMCGTHRETKKMFCEVDRSLLCLLCSSSQEHRDHRHCPI). Residues C93, H96, C115, and H121 each coordinate Zn(2+). The B30.2/SPRY domain maps to 269-452 (ELSAGPITGL…LRPIFCCIHF (184 aa)).

This sequence belongs to the TRIM/RBCC family.

This Homo sapiens (Human) protein is Putative tripartite motif-containing protein 49B (TRIM49B).